Consider the following 130-residue polypeptide: Glycine cleavage system H protein (130 aa).

The region spanning 22 to 103 is the Lipoyl-binding domain; sequence KAYIGISDCA…PYGSWIAAIE (82 aa). Lys63 carries the N6-lipoyllysine modification.

Belongs to the GcvH family. The glycine cleavage system is composed of four proteins: P, T, L and H. The cofactor is (R)-lipoate.

Its function is as follows. The glycine cleavage system catalyzes the degradation of glycine. The H protein shuttles the methylamine group of glycine from the P protein to the T protein. The protein is Glycine cleavage system H protein of Clostridium botulinum (strain Okra / Type B1).